We begin with the raw amino-acid sequence, 197 residues long: Translation machinery-associated protein 22 (197 aa).

In terms of domain architecture, SUI1 spans 103 to 174 (IRIKRVERNK…DVREFLIKNY (72 aa)).

This sequence belongs to the DENR family. As to quaternary structure, interacts with the 40S ribosomal subunit.

It is found in the cytoplasm. The chain is Translation machinery-associated protein 22 (tma22) from Botryotinia fuckeliana (strain B05.10) (Noble rot fungus).